The chain runs to 139 residues: Large-conductance mechanosensitive channel 1 (139 aa).

3 helical membrane-spanning segments follow: residues 8-28, 30-50, and 81-101; these read FISK…AAFG, IVDS…FGGL, and GSFI…FLMV.

It belongs to the MscL family. As to quaternary structure, homopentamer.

It localises to the cell inner membrane. Functionally, channel that opens in response to stretch forces in the membrane lipid bilayer. May participate in the regulation of osmotic pressure changes within the cell. The protein is Large-conductance mechanosensitive channel 1 of Mesorhizobium japonicum (strain LMG 29417 / CECT 9101 / MAFF 303099) (Mesorhizobium loti (strain MAFF 303099)).